Consider the following 545-residue polypeptide: CTP synthase (545 aa).

Positions 1–266 (MTTNYIFVTG…DDYICKRFSL (266 aa)) are amidoligase domain. Ser14 contributes to the CTP binding site. Ser14 provides a ligand contact to UTP. ATP is bound by residues 15-20 (SLGKGI) and Asp72. Mg(2+)-binding residues include Asp72 and Glu140. Residues 147–149 (DIE), 187–192 (KTKPTQ), and Lys223 each bind CTP. Residues 187 to 192 (KTKPTQ) and Lys223 each bind UTP. 239–241 (KDV) serves as a coordination point for ATP. The 252-residue stretch at 291-542 (TIGMVGKYIE…VKAASEFQKR (252 aa)) folds into the Glutamine amidotransferase type-1 domain. Gly352 contributes to the L-glutamine binding site. The Nucleophile; for glutamine hydrolysis role is filled by Cys379. L-glutamine-binding positions include 380–383 (LGMQ), Glu403, and Arg470. Catalysis depends on residues His515 and Glu517.

Belongs to the CTP synthase family. Homotetramer.

The enzyme catalyses UTP + L-glutamine + ATP + H2O = CTP + L-glutamate + ADP + phosphate + 2 H(+). It carries out the reaction L-glutamine + H2O = L-glutamate + NH4(+). The catalysed reaction is UTP + NH4(+) + ATP = CTP + ADP + phosphate + 2 H(+). It functions in the pathway pyrimidine metabolism; CTP biosynthesis via de novo pathway; CTP from UDP: step 2/2. Allosterically activated by GTP, when glutamine is the substrate; GTP has no effect on the reaction when ammonia is the substrate. The allosteric effector GTP functions by stabilizing the protein conformation that binds the tetrahedral intermediate(s) formed during glutamine hydrolysis. Inhibited by the product CTP, via allosteric rather than competitive inhibition. Its function is as follows. Catalyzes the ATP-dependent amination of UTP to CTP with either L-glutamine or ammonia as the source of nitrogen. Regulates intracellular CTP levels through interactions with the four ribonucleotide triphosphates. In Escherichia coli O127:H6 (strain E2348/69 / EPEC), this protein is CTP synthase.